We begin with the raw amino-acid sequence, 252 residues long: 4-hydroxy-tetrahydrodipicolinate reductase (252 aa).

NAD(+) contacts are provided by residues 8 to 13, 85 to 87, and 109 to 112; these read GCSGKM, CTT, and SANM. Residue histidine 142 is the Proton donor/acceptor of the active site. A (S)-2,3,4,5-tetrahydrodipicolinate-binding site is contributed by histidine 143. Catalysis depends on lysine 146, which acts as the Proton donor. Residue 152-153 coordinates (S)-2,3,4,5-tetrahydrodipicolinate; that stretch reads GT.

It belongs to the DapB family.

It localises to the cytoplasm. The catalysed reaction is (S)-2,3,4,5-tetrahydrodipicolinate + NAD(+) + H2O = (2S,4S)-4-hydroxy-2,3,4,5-tetrahydrodipicolinate + NADH + H(+). It catalyses the reaction (S)-2,3,4,5-tetrahydrodipicolinate + NADP(+) + H2O = (2S,4S)-4-hydroxy-2,3,4,5-tetrahydrodipicolinate + NADPH + H(+). It functions in the pathway amino-acid biosynthesis; L-lysine biosynthesis via DAP pathway; (S)-tetrahydrodipicolinate from L-aspartate: step 4/4. Its function is as follows. Catalyzes the conversion of 4-hydroxy-tetrahydrodipicolinate (HTPA) to tetrahydrodipicolinate. In Clostridium novyi (strain NT), this protein is 4-hydroxy-tetrahydrodipicolinate reductase.